The sequence spans 258 residues: Imidazole glycerol phosphate synthase subunit HisF (258 aa).

Catalysis depends on residues Asp11 and Asp130.

Belongs to the HisA/HisF family. In terms of assembly, heterodimer of HisH and HisF.

It is found in the cytoplasm. The catalysed reaction is 5-[(5-phospho-1-deoxy-D-ribulos-1-ylimino)methylamino]-1-(5-phospho-beta-D-ribosyl)imidazole-4-carboxamide + L-glutamine = D-erythro-1-(imidazol-4-yl)glycerol 3-phosphate + 5-amino-1-(5-phospho-beta-D-ribosyl)imidazole-4-carboxamide + L-glutamate + H(+). The protein operates within amino-acid biosynthesis; L-histidine biosynthesis; L-histidine from 5-phospho-alpha-D-ribose 1-diphosphate: step 5/9. In terms of biological role, IGPS catalyzes the conversion of PRFAR and glutamine to IGP, AICAR and glutamate. The HisF subunit catalyzes the cyclization activity that produces IGP and AICAR from PRFAR using the ammonia provided by the HisH subunit. This chain is Imidazole glycerol phosphate synthase subunit HisF, found in Stenotrophomonas maltophilia (strain R551-3).